Reading from the N-terminus, the 633-residue chain is Extracellular metalloproteinase 5 (633 aa).

A signal peptide spans 1–21; the sequence is MHGLLLAAAGLLSLPLHVVAH. A propeptide spanning residues 22 to 245 is cleaved from the precursor; the sequence is PQPSTSLAGR…HNVVDYVSHA (224 aa). N-linked (GlcNAc...) asparagine glycosylation occurs at asparagine 285. Residue histidine 428 coordinates Zn(2+). Glutamate 429 is an active-site residue. A Zn(2+)-binding site is contributed by histidine 432. N-linked (GlcNAc...) asparagine glycosylation is found at asparagine 592 and asparagine 621.

It belongs to the peptidase M36 family. Zn(2+) serves as cofactor.

The protein resides in the secreted. Functionally, secreted metalloproteinase probably acting as a virulence factor. The protein is Extracellular metalloproteinase 5 (MEP5) of Trichophyton rubrum (Athlete's foot fungus).